Reading from the N-terminus, the 248-residue chain is Pyridoxine 5'-phosphate synthase (248 aa).

N12 is a 3-amino-2-oxopropyl phosphate binding site. 14 to 15 is a 1-deoxy-D-xylulose 5-phosphate binding site; the sequence is DH. 3-amino-2-oxopropyl phosphate is bound at residue R23. Catalysis depends on H48, which acts as the Proton acceptor. 2 residues coordinate 1-deoxy-D-xylulose 5-phosphate: R50 and H55. E75 functions as the Proton acceptor in the catalytic mechanism. T105 serves as a coordination point for 1-deoxy-D-xylulose 5-phosphate. H196 acts as the Proton donor in catalysis. 3-amino-2-oxopropyl phosphate-binding positions include G197 and 218–219; that span reads GH.

This sequence belongs to the PNP synthase family. As to quaternary structure, homooctamer; tetramer of dimers.

The protein resides in the cytoplasm. The enzyme catalyses 3-amino-2-oxopropyl phosphate + 1-deoxy-D-xylulose 5-phosphate = pyridoxine 5'-phosphate + phosphate + 2 H2O + H(+). Its pathway is cofactor biosynthesis; pyridoxine 5'-phosphate biosynthesis; pyridoxine 5'-phosphate from D-erythrose 4-phosphate: step 5/5. In terms of biological role, catalyzes the complicated ring closure reaction between the two acyclic compounds 1-deoxy-D-xylulose-5-phosphate (DXP) and 3-amino-2-oxopropyl phosphate (1-amino-acetone-3-phosphate or AAP) to form pyridoxine 5'-phosphate (PNP) and inorganic phosphate. The protein is Pyridoxine 5'-phosphate synthase of Stutzerimonas stutzeri (strain A1501) (Pseudomonas stutzeri).